We begin with the raw amino-acid sequence, 180 residues long: Adenine phosphoribosyltransferase (180 aa).

Ser-2 carries the N-acetylserine modification. Phosphoserine occurs at positions 15 and 30. Position 60 is a phosphotyrosine (Tyr-60). At Ser-66 the chain carries Phosphoserine. Lys-114 bears the N6-acetyllysine mark. Thr-135 is subject to Phosphothreonine.

It belongs to the purine/pyrimidine phosphoribosyltransferase family. As to quaternary structure, homodimer.

The protein localises to the cytoplasm. The enzyme catalyses AMP + diphosphate = 5-phospho-alpha-D-ribose 1-diphosphate + adenine. It participates in purine metabolism; AMP biosynthesis via salvage pathway; AMP from adenine: step 1/1. Functionally, catalyzes a salvage reaction resulting in the formation of AMP, that is energically less costly than de novo synthesis. The chain is Adenine phosphoribosyltransferase from Stochomys longicaudatus (Target rat).